We begin with the raw amino-acid sequence, 521 residues long: MKVASLLSLALPGAALAATDPFQSRCNEFQNKIDIANVTVRSVAYVAAGQNISQAEVASVCKASVQASVDLCRVTMNISTSDRSHLWAEAWLPRNYTGRFVSTGNGGLAGCVQETDLNFAANFGFATVGTNGGHDGDTAKYFLNNSEVLADFAYRSVHEGTVVGKQLTQLFYDEGYNYSYYLGCSTGGRQGYQQVQRFPDDYDGVIAGSAAMNFINLISWGAFLWKATGLADDPDFISANLWSVIHQEIVRQCDLVDGALDGIIEDPDFCAPVIERLICDGTTNGTSCITGAQAAKVNRALSDFYGPDGTVYYPRLNYGGEADSASLYFTGSMYSRTEEWYKYVVYNDTNWNSSQWTLESAKLALEQNPFNIQAFDPNITAFRDRGGKLLSYHGTQDPIISSTDSKLYYRRVANALNAAPSELDEFYRFFQISGMGHCGDGTGASYIGQGYGTYTSKAPQVNLLRTMVDWVENGKAPEYMPGNKLNANGSIEYMRKHCRYPKHNIHTGPGNYTDPNSWTCV.

The N-terminal stretch at 1-17 is a signal peptide; that stretch reads MKVASLLSLALPGAALA. 2 disulfides stabilise this stretch: Cys26–Cys72 and Cys61–Cys111. Asn37, Asn51, Asn77, Asn95, Asn144, and Asn177 each carry an N-linked (GlcNAc...) asparagine glycan. Cystine bridges form between Cys184-Cys438, Cys253-Cys270, and Cys279-Cys288. The active-site Acyl-ester intermediate is Ser185. Ca(2+) contacts are provided by Asp254, Asp257, Ala259, Asp261, and Ile263. N-linked (GlcNAc...) asparagine glycans are attached at residues Asn284, Asn347, Asn352, and Asn378. Residues Asp397 and His437 each act as charge relay system in the active site. N-linked (GlcNAc...) asparagine glycans are attached at residues Asn488 and Asn511. An intrachain disulfide couples Cys498 to Cys520.

The protein belongs to the tannase family. In terms of assembly, homodimer. Post-translationally, glycosylated.

It localises to the secreted. The catalysed reaction is feruloyl-polysaccharide + H2O = ferulate + polysaccharide.. Inhibited by the specific serine esterase inhibitor AEBSF. Functionally, involved in degradation of plant cell walls. Hydrolyzes of the feruloyl-arabinose ester bond in arabinoxylans as well as the feruloyl-galactose and feruloyl-arabinose ester bonds in pectin. In Aspergillus niger, this protein is Feruloyl esterase B (faeB).